The following is a 61-amino-acid chain: uncharacterized protein (61 aa).

It localises to the mitochondrion. This is an uncharacterized protein from Marchantia polymorpha (Common liverwort).